Consider the following 513-residue polypeptide: Plexin domain-containing protein 2 (513 aa).

The signal sequence occupies residues 1–24; the sequence is MGARSESLVGVVLLFQLLADRLWC. Residues 25–438 lie on the Extracellular side of the membrane; it reads AATASDSLYD…AEMKTGTLHT (414 aa). 6 N-linked (GlcNAc...) asparagine glycosylation sites follow: N88, N145, N198, N206, N222, and N330. Positions 312-357 constitute a PSI domain; sequence TCLQFNSCSSCVSSMIGFNCSWCNIPQRCSSGFDRHRQDWVENGCT. A helical membrane pass occupies residues 439–459; the sequence is GLIIGILILVLLIITAILVAV. The Cytoplasmic segment spans residues 460 to 513; sequence YMYHHPTSSASLFLIERRPSRWPAMKFRRGSGHPAYAEVEPIGEKEGFIVSEQC.

This sequence belongs to the plexin family.

Its subcellular location is the membrane. The chain is Plexin domain-containing protein 2 (plxdc2) from Xenopus laevis (African clawed frog).